The following is a 380-amino-acid chain: Shaggy-related protein kinase eta (380 aa).

A Protein kinase domain is found at 40–324; the sequence is YMAERVVGTG…ALEACAHPFF (285 aa). ATP-binding positions include 46–54 and Lys69; that span reads VGTGSFGIV. Thr104 carries the phosphothreonine modification. A Phosphoserine modification is found at Ser105. The active-site Proton acceptor is Asp165. The residue at position 187 (Ser187) is a Phosphoserine. Tyr200 carries the phosphotyrosine modification. A phosphothreonine mark is found at Thr220 and Thr261. Ser310 is modified (phosphoserine). Thr314 is modified (phosphothreonine). Residue Ser353 is modified to Phosphoserine.

This sequence belongs to the protein kinase superfamily. CMGC Ser/Thr protein kinase family. GSK-3 subfamily. In terms of assembly, interacts in vitro with the C-terminal fragment of BZR1 and with BES1/BZR2, but not through the kinase domain. Interacts with BHLH150, beet curly top virus AL4/C4 and tomato golden mosaic virus AL4/AC4. Interacts with YDA. Interacts with MKK4. Interacts with KIB1 and KIB2 in a brassinosteroid (BR)-dependent manner. Interacts with BSK1, BSK6, BSK8 and BSK11. Binds to WRKY46, WRKY54 and WRKY70. Component of a complex made of POLAR, BASL, ASK7/BIN2 and ASK3/SK12. Binds to POLAR and BASL. In terms of processing, autophosphorylated mainly on threonine and serine residues. Ubiquitination and subsequent proteasomal degradation mediated by KIB1. In terms of tissue distribution, in the two outer cell layers of the developing seed coat and restricted to the suspensor cells in developing embryos. Mostly expressed in stomatal lineage cells with asymmetric cell division (ACD) potential. Observed in small cells of non-protruding hypocotyl cell files and of developing cotyledon epidermis.

It localises to the cytoplasm. It is found in the cell cortex. The protein resides in the nucleus. The protein localises to the cell membrane. It catalyses the reaction L-seryl-[protein] + ATP = O-phospho-L-seryl-[protein] + ADP + H(+). It carries out the reaction L-threonyl-[protein] + ATP = O-phospho-L-threonyl-[protein] + ADP + H(+). Its activity is regulated as follows. Inactivated by an unknown mechanism after binding of brassinosteroids to the brassinosteroid receptor complex. Inhibited by lithium. Inhibited by dephosphorylation at Tyr-200 by BSU1. Competitive inhibition by KIB1 that reduces substrate (e.g. BZR1) access. Repressed by bikinin. Negative regulator in brassinosteroid signal transduction pathway important for plant growth. May be also involved in auxin signaling pathway. Phosphorylates and increases the degradation of BZR1 and BZR2/BES1 by the proteasome. Phosphorylates BHLH150, beet curly top virus C4 and tomato golden mosaic virus AC4 on threonine and serine residues. Upon brassinosteroid signaling, inhibits stomatal development by phosphorylating and inhibiting the MAPKK kinase YDA and the MAPK kinases MKK4 and MKK5. Phosphorylates BSK1, BSK3, BSK5, BSK6, BSK8 and BSK11 in vitro. Phoyphorylates and destabilizes WRKY46, WRKY54 and WRKY70. Mediates BASL nuclear exclusion; kinase activity is required for this function. Required first at the cortical polarity site, to restrict MAPK signaling and promote asymmetric cell division (ACD), and second in the nucleus of stomatal lineage ground cells (SLGCs) or meristemoids, to limit cell division and to promote differentiation into pavement or stomatal guard cells, respectively, likely by initiating BASL polarization. Phosphorylates BASL, YDA and SPCH in vitro and POLAR in vivo. Phosphorylates and inhibits SPCH in the nucleus of SLGC undergoing ACD, thus negatively regulating stomatal development. The chain is Shaggy-related protein kinase eta from Arabidopsis thaliana (Mouse-ear cress).